Consider the following 257-residue polypeptide: tRNA (guanine-N(1)-)-methyltransferase (257 aa).

S-adenosyl-L-methionine contacts are provided by residues G117 and 137–142 (LGDFVL).

Belongs to the RNA methyltransferase TrmD family. As to quaternary structure, homodimer.

The protein localises to the cytoplasm. It carries out the reaction guanosine(37) in tRNA + S-adenosyl-L-methionine = N(1)-methylguanosine(37) in tRNA + S-adenosyl-L-homocysteine + H(+). Functionally, specifically methylates guanosine-37 in various tRNAs. This chain is tRNA (guanine-N(1)-)-methyltransferase, found in Bordetella parapertussis (strain 12822 / ATCC BAA-587 / NCTC 13253).